The primary structure comprises 169 residues: MTDSDHRLPDRPGEGDPGRGRRIGIDVGCVRVGVATSDPDGVLATPVETVRREKSSDRHVRRLAQLVTELEAVEVVVGLPRTLADRTGPAAHDAIDVAEALARRIAPVPVRMADERLTTVSAQRSLREAGVRAKGQRAMIDQVAAVGILQSWLDQRRAALAAPGEGGHG.

Positions 1–19 (MTDSDHRLPDRPGEGDPGR) are enriched in basic and acidic residues. Residues 1 to 22 (MTDSDHRLPDRPGEGDPGRGRR) form a disordered region.

Belongs to the YqgF nuclease family.

The protein resides in the cytoplasm. In terms of biological role, could be a nuclease involved in processing of the 5'-end of pre-16S rRNA. The polypeptide is Putative pre-16S rRNA nuclease (Mycobacterium sp. (strain JLS)).